We begin with the raw amino-acid sequence, 349 residues long: Small ribosomal subunit biogenesis GTPase RsgA (349 aa).

Residues 1–11 (MSKKKLSKGQQ) show a composition bias toward basic residues. The disordered stretch occupies residues 1–29 (MSKKKLSKGQQRRVSANHQRRLKKTESKV). The 171-residue stretch at 102-272 (HSVLTRPDYY…VIDSPGVREF (171 aa)) folds into the CP-type G domain. Residues 158-161 (NKID) and 212-220 (GQSGVGKSS) contribute to the GTP site. Residues C296, C301, H303, and C309 each coordinate Zn(2+).

It belongs to the TRAFAC class YlqF/YawG GTPase family. RsgA subfamily. Monomer. Associates with 30S ribosomal subunit, binds 16S rRNA. It depends on Zn(2+) as a cofactor.

The protein localises to the cytoplasm. Functionally, one of several proteins that assist in the late maturation steps of the functional core of the 30S ribosomal subunit. Helps release RbfA from mature subunits. May play a role in the assembly of ribosomal proteins into the subunit. Circularly permuted GTPase that catalyzes slow GTP hydrolysis, GTPase activity is stimulated by the 30S ribosomal subunit. This chain is Small ribosomal subunit biogenesis GTPase RsgA, found in Pectobacterium atrosepticum (strain SCRI 1043 / ATCC BAA-672) (Erwinia carotovora subsp. atroseptica).